Consider the following 707-residue polypeptide: Matrix metalloproteinase-9 (707 aa).

The first 19 residues, 1–19, serve as a signal peptide directing secretion; that stretch reads MSLWQPLVLVLLVLGCCFA. A propeptide spans 20-93 (activation peptide); sequence APRQRQSTLV…GELDSATLKA (74 aa). The N-linked (GlcNAc...) asparagine glycan is linked to Asn-38. A Cysteine switch motif is present at residues 97–104; that stretch reads PRCGVPDL. Cys-99 contacts Zn(2+). Residues Asn-120 and Asn-127 are each glycosylated (N-linked (GlcNAc...) asparagine). Residues Asp-131 and Asp-165 each contribute to the Ca(2+) site. Residues His-175 and Asp-177 each coordinate Zn(2+). Asp-182, Gly-183, Asp-185, and Leu-187 together coordinate Ca(2+). Position 190 (His-190) interacts with Zn(2+). Gly-197, Gln-199, and Asp-201 together coordinate Ca(2+). His-203 contacts Zn(2+). Ca(2+) is bound by residues Asp-205, Asp-206, and Glu-208. Fibronectin type-II domains lie at 225-273, 283-331, and 342-390; these read ADGA…FCPS, ADGK…FCPT, and SAGE…FCPD. 6 disulfides stabilise this stretch: Cys-230-Cys-256, Cys-244-Cys-271, Cys-288-Cys-314, Cys-302-Cys-329, Cys-347-Cys-373, and Cys-361-Cys-388. Residue His-401 participates in Zn(2+) binding. Residue Glu-402 is part of the active site. His-405 and His-411 together coordinate Zn(2+). Positions 431–508 are disordered; sequence LHKDDVNGIR…AGPSTATTVP (78 aa). Pro residues-rich tracts occupy residues 452–475 and 486–499; these read RPPTTTTPQPTAPPTVCPTGPPTV and TGPPSAGPTGPPTA. Cys-516 and Cys-704 form a disulfide bridge. Hemopexin repeat units lie at residues 518-563, 564-608, 610-657, and 658-704; these read VNIF…WPAL, PRKL…GLGA, VAQV…FPGV, and PLDT…ILQC.

The protein belongs to the peptidase M10A family. Exists as monomer or homodimer; disulfide-linked. Also exists as heterodimer with LCN2. Macrophages and transformed cell lines produce only the monomeric form. Interacts with ECM1. In terms of assembly, (Microbial infection) Interacts with Staphylococcus aureus protein SSL5; this interaction inhibits MMP9 activity. Zn(2+) serves as cofactor. Ca(2+) is required as a cofactor. Post-translationally, processing of the precursor yields different active forms of 64, 67 and 82 kDa. Sequentially processing by MMP3 yields the 82 kDa matrix metalloproteinase-9. N- and O-glycosylated. In terms of tissue distribution, detected in neutrophils (at protein level). Produced by normal alveolar macrophages and granulocytes.

It localises to the secreted. The protein resides in the extracellular space. The protein localises to the extracellular matrix. The enzyme catalyses Cleavage of gelatin types I and V and collagen types IV and V.. Its activity is regulated as follows. Inhibited by histatin-3 1/24 (histatin-5). Inhibited by ECM1. Matrix metalloproteinase that plays an essential role in local proteolysis of the extracellular matrix and in leukocyte migration. Could play a role in bone osteoclastic resorption. Cleaves KiSS1 at a Gly-|-Leu bond. Cleaves NINJ1 to generate the Secreted ninjurin-1 form. Cleaves type IV and type V collagen into large C-terminal three quarter fragments and shorter N-terminal one quarter fragments. Degrades fibronectin but not laminin or Pz-peptide. The polypeptide is Matrix metalloproteinase-9 (MMP9) (Homo sapiens (Human)).